Here is a 120-residue protein sequence, read N- to C-terminus: MMIIDCGKYYGIDYKSSSLQKLIENSLTSQEICKCIDKINTIRAHKKVMNTIIKYVPKLFPRVVSHPYGLCMQIMKLKWDLSDCNDKQYTNEHCIKVMNYIGATDICHLQEKLNDINKFV.

This is an uncharacterized protein from Acanthamoeba polyphaga mimivirus (APMV).